We begin with the raw amino-acid sequence, 368 residues long: Phosphate acyltransferase (368 aa).

Residues 338–368 (GDGGHDAGGAGTASPAPGHHAEPSAAQSSKA) are disordered.

The protein belongs to the PlsX family. As to quaternary structure, homodimer. Probably interacts with PlsY.

It is found in the cytoplasm. The enzyme catalyses a fatty acyl-[ACP] + phosphate = an acyl phosphate + holo-[ACP]. It functions in the pathway lipid metabolism; phospholipid metabolism. In terms of biological role, catalyzes the reversible formation of acyl-phosphate (acyl-PO(4)) from acyl-[acyl-carrier-protein] (acyl-ACP). This enzyme utilizes acyl-ACP as fatty acyl donor, but not acyl-CoA. The sequence is that of Phosphate acyltransferase from Burkholderia ambifaria (strain MC40-6).